A 609-amino-acid chain; its full sequence is UvrABC system protein C (609 aa).

Residues 16–94 enclose the GIY-YIG domain; that stretch reads SSPGVYRMYD…IKQYMPKYNV (79 aa). Residues 203 to 238 enclose the UVR domain; that stretch reads QQVTKALVAKMEQAAVELNYEQAARYRDQITALRRV.

Belongs to the UvrC family. Interacts with UvrB in an incision complex.

Its subcellular location is the cytoplasm. In terms of biological role, the UvrABC repair system catalyzes the recognition and processing of DNA lesions. UvrC both incises the 5' and 3' sides of the lesion. The N-terminal half is responsible for the 3' incision and the C-terminal half is responsible for the 5' incision. This chain is UvrABC system protein C, found in Shewanella piezotolerans (strain WP3 / JCM 13877).